A 223-amino-acid polypeptide reads, in one-letter code: 2-phospho-L-lactate guanylyltransferase (223 aa).

It belongs to the CofC family. Homodimer.

The enzyme catalyses (2S)-2-phospholactate + GTP + H(+) = (2S)-lactyl-2-diphospho-5'-guanosine + diphosphate. It participates in cofactor biosynthesis; coenzyme F420 biosynthesis. In terms of biological role, guanylyltransferase that catalyzes the activation of (2S)-2-phospholactate (2-PL) as (2S)-lactyl-2-diphospho-5'-guanosine, via the condensation of 2-PL with GTP. It is involved in the biosynthesis of coenzyme F420, a hydride carrier cofactor. The sequence is that of 2-phospho-L-lactate guanylyltransferase from Methanothermobacter thermautotrophicus (strain ATCC 29096 / DSM 1053 / JCM 10044 / NBRC 100330 / Delta H) (Methanobacterium thermoautotrophicum).